The chain runs to 439 residues: Xylose isomerase (439 aa).

Active-site residues include His101 and Asp104. Mg(2+) contacts are provided by Glu232, Glu268, His271, Asp296, Asp307, Asp309, and Asp339.

The protein belongs to the xylose isomerase family. In terms of assembly, homotetramer. The cofactor is Mg(2+).

It is found in the cytoplasm. The catalysed reaction is alpha-D-xylose = alpha-D-xylulofuranose. This chain is Xylose isomerase, found in Yersinia enterocolitica serotype O:8 / biotype 1B (strain NCTC 13174 / 8081).